The sequence spans 823 residues: Translation initiation factor IF-2 (823 aa).

Disordered stretches follow at residues 30–66 and 156–192; these read VPPS…DDKR and TPSH…IKKV. Over residues 36 to 48 the composition is skewed to polar residues; sequence RGTSTGKSFTTVE. Positions 56 to 66 are enriched in basic and acidic residues; it reads PGEYISHDDKR. The tr-type G domain maps to 322–491; that stretch reads PRPPVVTVMG…LLLAEMLELS (170 aa). A G1 region spans residues 331–338; that stretch reads GHVDHGKT. A GTP-binding site is contributed by 331–338; that stretch reads GHVDHGKT. Residues 356 to 360 form a G2 region; it reads GITQH. Residues 377–380 are G3; the sequence is DTPG. Residues 377–381 and 431–434 contribute to the GTP site; these read DTPGH and NKID. Residues 431-434 are G4; sequence NKID. The segment at 467–469 is G5; it reads SAK.

Belongs to the TRAFAC class translation factor GTPase superfamily. Classic translation factor GTPase family. IF-2 subfamily.

The protein resides in the cytoplasm. Functionally, one of the essential components for the initiation of protein synthesis. Protects formylmethionyl-tRNA from spontaneous hydrolysis and promotes its binding to the 30S ribosomal subunits. Also involved in the hydrolysis of GTP during the formation of the 70S ribosomal complex. The chain is Translation initiation factor IF-2 from Anaplasma phagocytophilum (strain HZ).